A 252-amino-acid polypeptide reads, in one-letter code: Trans-aconitate 2-methyltransferase (252 aa).

Belongs to the methyltransferase superfamily. Tam family.

It is found in the cytoplasm. It catalyses the reaction trans-aconitate + S-adenosyl-L-methionine = (E)-3-(methoxycarbonyl)pent-2-enedioate + S-adenosyl-L-homocysteine. Catalyzes the S-adenosylmethionine monomethyl esterification of trans-aconitate. This is Trans-aconitate 2-methyltransferase from Escherichia fergusonii (strain ATCC 35469 / DSM 13698 / CCUG 18766 / IAM 14443 / JCM 21226 / LMG 7866 / NBRC 102419 / NCTC 12128 / CDC 0568-73).